The following is a 113-amino-acid chain: Protein Wnt-10 (113 aa).

Ser-1 is lipidated: O-palmitoleoyl serine; by PORCN. A disulfide bridge links Cys-79 with Cys-94.

The protein belongs to the Wnt family. In terms of processing, palmitoleoylation is required for efficient binding to frizzled receptors. Depalmitoleoylation leads to Wnt signaling pathway inhibition.

It localises to the secreted. It is found in the extracellular space. Its subcellular location is the extracellular matrix. Functionally, ligand for members of the frizzled family of seven transmembrane receptors. Probable developmental protein. May be a signaling molecule which affects the development of discrete regions of tissues. Is likely to signal over only few cell diameters. The protein is Protein Wnt-10 (WNT-10) of Eptatretus stoutii (Pacific hagfish).